The chain runs to 114 residues: Peroxisomal biogenesis factor 39 (114 aa).

Disordered regions lie at residues 1 to 26 and 53 to 114; these read MSWW…AEPA and ITAT…PRVS. S102 is subject to Phosphoserine.

Its subcellular location is the peroxisome. May be a peroxin involved in the PTS2-mediated protein import pathway. This chain is Peroxisomal biogenesis factor 39 (Pex39), found in Mus musculus (Mouse).